Consider the following 198-residue polypeptide: Na(+)-translocating NADH-quinone reductase subunit E (198 aa).

6 helical membrane-spanning segments follow: residues 11–31 (AVFI…FLAV), 35–55 (VSTA…AVPV), 77–97 (FLNF…LEMV), 110–130 (GIFL…SFMV), 140–160 (IVYG…LAGL), and 176–196 (LGIT…FSGI).

The protein belongs to the NqrDE/RnfAE family. Composed of six subunits; NqrA, NqrB, NqrC, NqrD, NqrE and NqrF.

The protein resides in the cell inner membrane. The catalysed reaction is a ubiquinone + n Na(+)(in) + NADH + H(+) = a ubiquinol + n Na(+)(out) + NAD(+). In terms of biological role, NQR complex catalyzes the reduction of ubiquinone-1 to ubiquinol by two successive reactions, coupled with the transport of Na(+) ions from the cytoplasm to the periplasm. NqrA to NqrE are probably involved in the second step, the conversion of ubisemiquinone to ubiquinol. The sequence is that of Na(+)-translocating NADH-quinone reductase subunit E from Haemophilus influenzae (strain 86-028NP).